Here is a 743-residue protein sequence, read N- to C-terminus: 1,4-alpha-glucan branching enzyme GlgB (743 aa).

Residue aspartate 416 is the Nucleophile of the active site. Residue glutamate 469 is the Proton donor of the active site.

It belongs to the glycosyl hydrolase 13 family. GlgB subfamily. As to quaternary structure, monomer.

The catalysed reaction is Transfers a segment of a (1-&gt;4)-alpha-D-glucan chain to a primary hydroxy group in a similar glucan chain.. It functions in the pathway glycan biosynthesis; glycogen biosynthesis. Catalyzes the formation of the alpha-1,6-glucosidic linkages in glycogen by scission of a 1,4-alpha-linked oligosaccharide from growing alpha-1,4-glucan chains and the subsequent attachment of the oligosaccharide to the alpha-1,6 position. This chain is 1,4-alpha-glucan branching enzyme GlgB, found in Shewanella baltica (strain OS223).